The chain runs to 138 residues: ATP synthase epsilon chain (138 aa).

This sequence belongs to the ATPase epsilon chain family. In terms of assembly, F-type ATPases have 2 components, CF(1) - the catalytic core - and CF(0) - the membrane proton channel. CF(1) has five subunits: alpha(3), beta(3), gamma(1), delta(1), epsilon(1). CF(0) has three main subunits: a, b and c.

The protein resides in the cell inner membrane. Functionally, produces ATP from ADP in the presence of a proton gradient across the membrane. The sequence is that of ATP synthase epsilon chain from Blochmanniella floridana.